The primary structure comprises 130 residues: Large ribosomal subunit protein bL19 (130 aa).

This sequence belongs to the bacterial ribosomal protein bL19 family.

Its function is as follows. This protein is located at the 30S-50S ribosomal subunit interface and may play a role in the structure and function of the aminoacyl-tRNA binding site. The sequence is that of Large ribosomal subunit protein bL19 from Cupriavidus metallidurans (strain ATCC 43123 / DSM 2839 / NBRC 102507 / CH34) (Ralstonia metallidurans).